Reading from the N-terminus, the 97-residue chain is YcgL domain-containing protein PST_1364 (97 aa).

A YcgL domain is found at 3-87; it reads LICSIYKSPR…AEDEYIEHLP (85 aa).

The polypeptide is YcgL domain-containing protein PST_1364 (Stutzerimonas stutzeri (strain A1501) (Pseudomonas stutzeri)).